Reading from the N-terminus, the 167-residue chain is Phosphopantetheine adenylyltransferase (167 aa).

Ser8 lines the substrate pocket. ATP-binding positions include 8–9 (SF) and His16. Residues Lys40, Leu74, and Arg88 each coordinate substrate. ATP-binding positions include 89 to 91 (GLR), Glu99, and 123 to 129 (WSFVSSS).

The protein belongs to the bacterial CoaD family. In terms of assembly, homohexamer. Mg(2+) is required as a cofactor.

Its subcellular location is the cytoplasm. It catalyses the reaction (R)-4'-phosphopantetheine + ATP + H(+) = 3'-dephospho-CoA + diphosphate. The protein operates within cofactor biosynthesis; coenzyme A biosynthesis; CoA from (R)-pantothenate: step 4/5. In terms of biological role, reversibly transfers an adenylyl group from ATP to 4'-phosphopantetheine, yielding dephospho-CoA (dPCoA) and pyrophosphate. The sequence is that of Phosphopantetheine adenylyltransferase from Deinococcus radiodurans (strain ATCC 13939 / DSM 20539 / JCM 16871 / CCUG 27074 / LMG 4051 / NBRC 15346 / NCIMB 9279 / VKM B-1422 / R1).